The sequence spans 874 residues: Alanine--tRNA ligase (874 aa).

Residues His564, His568, Cys665, and His669 each coordinate Zn(2+).

Belongs to the class-II aminoacyl-tRNA synthetase family. Zn(2+) serves as cofactor.

It is found in the cytoplasm. It catalyses the reaction tRNA(Ala) + L-alanine + ATP = L-alanyl-tRNA(Ala) + AMP + diphosphate. In terms of biological role, catalyzes the attachment of alanine to tRNA(Ala) in a two-step reaction: alanine is first activated by ATP to form Ala-AMP and then transferred to the acceptor end of tRNA(Ala). Also edits incorrectly charged Ser-tRNA(Ala) and Gly-tRNA(Ala) via its editing domain. This chain is Alanine--tRNA ligase, found in Burkholderia multivorans (strain ATCC 17616 / 249).